Consider the following 289-residue polypeptide: tRNA dimethylallyltransferase (289 aa).

Position 9–16 (Gly9–Thr16) interacts with ATP. Substrate is bound at residue Thr11 to Thr16. Residues Asp34–Cys37 form an interaction with substrate tRNA region.

It belongs to the IPP transferase family. Monomer. Mg(2+) is required as a cofactor.

The catalysed reaction is adenosine(37) in tRNA + dimethylallyl diphosphate = N(6)-dimethylallyladenosine(37) in tRNA + diphosphate. Catalyzes the transfer of a dimethylallyl group onto the adenine at position 37 in tRNAs that read codons beginning with uridine, leading to the formation of N6-(dimethylallyl)adenosine (i(6)A). This is tRNA dimethylallyltransferase from Campylobacter jejuni subsp. jejuni serotype O:23/36 (strain 81-176).